A 477-amino-acid chain; its full sequence is Serine/threonine protein phosphatase 2A 55 kDa regulatory subunit B' delta isoform (477 aa).

This sequence belongs to the phosphatase 2A regulatory subunit B56 family. PP2A consists of a common heteromeric enzyme, composed of a catalytic subunit (subunits C), a constant regulatory subunit (subunit A), and a variety of regulatory subunits such as subunits B (the R2/B/PR55/B55, R3/B''/PR72/PR130/PR59 and R5/B'/B56 families). Interacts with SRK2E/OST1. In terms of tissue distribution, expressed ubiquitously.

The protein localises to the cytoplasm. Functionally, the B regulatory subunit may modulate substrate selectivity and catalytic activity, and may also direct the localization of the catalytic enzyme to a particular subcellular compartment. The sequence is that of Serine/threonine protein phosphatase 2A 55 kDa regulatory subunit B' delta isoform (B'DELTA) from Arabidopsis thaliana (Mouse-ear cress).